Here is a 600-residue protein sequence, read N- to C-terminus: Elongation factor 4 (600 aa).

Residues 4–187 (KYIRNFSIVA…AIIEQIPPPL (184 aa)) form the tr-type G domain. GTP-binding positions include 16 to 21 (DHGKST) and 134 to 137 (NKID).

This sequence belongs to the TRAFAC class translation factor GTPase superfamily. Classic translation factor GTPase family. LepA subfamily.

It localises to the cell membrane. It carries out the reaction GTP + H2O = GDP + phosphate + H(+). Functionally, required for accurate and efficient protein synthesis under certain stress conditions. May act as a fidelity factor of the translation reaction, by catalyzing a one-codon backward translocation of tRNAs on improperly translocated ribosomes. Back-translocation proceeds from a post-translocation (POST) complex to a pre-translocation (PRE) complex, thus giving elongation factor G a second chance to translocate the tRNAs correctly. Binds to ribosomes in a GTP-dependent manner. The sequence is that of Elongation factor 4 from Malacoplasma penetrans (strain HF-2) (Mycoplasma penetrans).